We begin with the raw amino-acid sequence, 153 residues long: uncharacterized protein (153 aa).

An N-acetylalanine modification is found at Ala-2.

This is an uncharacterized protein from Arabidopsis thaliana (Mouse-ear cress).